Here is a 522-residue protein sequence, read N- to C-terminus: FAD-dependent monooxygenase fsr3 (522 aa).

The tract at residues 1 to 27 is disordered; it reads MKNTQTNGTHPIIDKKPNGTLNGDHQE. Arginine 164 lines the FAD pocket. Arginine 245 is an active-site residue. Residues aspartate 369 and alanine 382 each contribute to the FAD site.

The protein belongs to the paxM FAD-dependent monooxygenase family. Requires FAD as cofactor.

Its pathway is polyketide biosynthesis. Functionally, FAD-dependent monooxygenase; part of the gene cluster that mediates the biosynthesis of fusarubins, highly pigmented naphthoquinones responsible for the coloration of the fruiting bodies. The non-reducing polyketide synthase FSR1 is responsible for the condensation of seven acetyl-CoA units to yield a haptaketide. After rings A and B are formed by aldol-type cyclization, the PKS-derived product is released as 6-O-demethylfusarubinaldehyde. Then, two hydroxyl groups at C-5 and C-10 are incorporated by FSR3, and simultaneously hydroxyl groups at C-6 and C-8 are methylated by FSR2. The aldehyde is, on the one hand, reduced by FSR3 to 8-O-methylfusarubin alcohol, which equilibrates mainly with 8-O-methylfusarubin and only small amounts of 8-O-methylnectriafurone. On the other hand, the aldehyde can be oxidized to form 8-O-methylfusarubinic acid, a reaction driven by FSR3 equilibrating with 8-O-methylfusarubinlactone, finally resulting in 8-O-methylanhydrofusarubinlactol after a further reduction step and loss of water. 8-O-Methylfusarubinic acid can also undergo decarboxylation, resulting in 8-O-methyl-13-hydroxynorjavanicin after another hydroxylation step at C-13. Both steps are most likely also accomplished by FSR3. No enzymatic function has been determined so far for either FSR4 and FSR5. Their deletion does not alter the product spectrum, but the possibility that they catalyze specific enzymatic steps during perithecium development cannot be ruled out. FSR4 might possess a regulatory function in the biosynthesis of fusarubins. The protein is FAD-dependent monooxygenase fsr3 of Gibberella fujikuroi (strain CBS 195.34 / IMI 58289 / NRRL A-6831) (Bakanae and foot rot disease fungus).